Here is a 239-residue protein sequence, read N- to C-terminus: Small ribosomal subunit protein uS3c (239 aa).

The region spanning 43-139 is the KH type-2 domain; the sequence is IKNYIQKNRK…RLNISIEKVK (97 aa). A disordered region spans residues 50–80; it reads NRKKSSNRKLESDSSSEVITHNRKNDSGSSS.

It belongs to the universal ribosomal protein uS3 family. In terms of assembly, part of the 30S ribosomal subunit.

The protein resides in the plastid. Its subcellular location is the chloroplast. This is Small ribosomal subunit protein uS3c (rps3) from Lolium perenne (Perennial ryegrass).